We begin with the raw amino-acid sequence, 537 residues long: MAKQIIFGEKVRVSLKKGVDTLANTVRVTLGPKGHPVALERKWGAPTVIDDGVTIARDIELPDAFENMGAQLVKEAATRTSDAAGDGTTTSIVLAQAIINEAFKNIAAGAEPINLKRGIEKAVAALKAQLRKNSTPVKGKQQIVQVATITGKDPEIGNLIADVMDKVGKDGVITIEESRGLRYETSYVEGMQFDRGYISAYFVTDPGRMESVMEDATILMTDRKIETVAELLPALEKILQISKNLVIVAENVEAEALATLVVNKLRGNLNILAVKAPGYGDRQKAMLEDMAILTGGHVISKEAGRKLDSVTEADLGHARRIVSNKDKTTIIDGEGSAEAIKDRIKQIKAQIEETESAFDREKLQERQAALVGGVAVIAVGAATETEMKERKARVEDALAATRAAIEEGILPGGGTGLLNALPCLDALKLEGDEATGVNIVRKALIEPVRWIATNAGKDGNVIVDKVKNSPVGHGYNAENDVFGDMAEMGIIDPTMVVRSALENAASIANMVLITDSLVADIQEKAPAAPGPEAAGMY.

ATP contacts are provided by residues 29 to 32 (TLGP), 86 to 90 (DGTTT), glycine 413, and aspartate 492.

Belongs to the chaperonin (HSP60) family. Forms a cylinder of 14 subunits composed of two heptameric rings stacked back-to-back. Interacts with the co-chaperonin GroES.

It localises to the cytoplasm. The enzyme catalyses ATP + H2O + a folded polypeptide = ADP + phosphate + an unfolded polypeptide.. Functionally, together with its co-chaperonin GroES, plays an essential role in assisting protein folding. The GroEL-GroES system forms a nano-cage that allows encapsulation of the non-native substrate proteins and provides a physical environment optimized to promote and accelerate protein folding. This chain is Chaperonin GroEL, found in Dehalococcoides mccartyi (strain CBDB1).